Reading from the N-terminus, the 178-residue chain is Large ribosomal subunit protein uL6 (178 aa).

It belongs to the universal ribosomal protein uL6 family. As to quaternary structure, part of the 50S ribosomal subunit.

Its function is as follows. This protein binds to the 23S rRNA, and is important in its secondary structure. It is located near the subunit interface in the base of the L7/L12 stalk, and near the tRNA binding site of the peptidyltransferase center. In Frankia alni (strain DSM 45986 / CECT 9034 / ACN14a), this protein is Large ribosomal subunit protein uL6.